Here is a 362-residue protein sequence, read N- to C-terminus: NAD(P)H-quinone oxidoreductase subunit 1, chloroplastic (362 aa).

Helical transmembrane passes span 29-49, 103-123, 128-148, 164-184, 202-222, 247-267, 303-323, and 335-355; these read ILPI…IVWL, IAVI…HFVL, IGVF…LMAG, AAQS…ISLL, FFGW…ISSL, YSGI…LVSS, TIGI…SITI, and LLNL…LLTT.

Belongs to the complex I subunit 1 family. In terms of assembly, NDH is composed of at least 16 different subunits, 5 of which are encoded in the nucleus.

The protein localises to the plastid. Its subcellular location is the chloroplast thylakoid membrane. It catalyses the reaction a plastoquinone + NADH + (n+1) H(+)(in) = a plastoquinol + NAD(+) + n H(+)(out). The enzyme catalyses a plastoquinone + NADPH + (n+1) H(+)(in) = a plastoquinol + NADP(+) + n H(+)(out). Functionally, NDH shuttles electrons from NAD(P)H:plastoquinone, via FMN and iron-sulfur (Fe-S) centers, to quinones in the photosynthetic chain and possibly in a chloroplast respiratory chain. The immediate electron acceptor for the enzyme in this species is believed to be plastoquinone. Couples the redox reaction to proton translocation, and thus conserves the redox energy in a proton gradient. This chain is NAD(P)H-quinone oxidoreductase subunit 1, chloroplastic, found in Agrostis stolonifera (Creeping bentgrass).